The sequence spans 424 residues: Serine hydroxymethyltransferase (424 aa).

Residues leucine 113 and 117-119 each bind (6S)-5,6,7,8-tetrahydrofolate; that span reads GHL. Lysine 222 is modified (N6-(pyridoxal phosphate)lysine). 361–363 contributes to the (6S)-5,6,7,8-tetrahydrofolate binding site; that stretch reads SPF.

This sequence belongs to the SHMT family. In terms of assembly, homodimer. Pyridoxal 5'-phosphate serves as cofactor.

It is found in the cytoplasm. The catalysed reaction is (6R)-5,10-methylene-5,6,7,8-tetrahydrofolate + glycine + H2O = (6S)-5,6,7,8-tetrahydrofolate + L-serine. The protein operates within one-carbon metabolism; tetrahydrofolate interconversion. It participates in amino-acid biosynthesis; glycine biosynthesis; glycine from L-serine: step 1/1. In terms of biological role, catalyzes the reversible interconversion of serine and glycine with tetrahydrofolate (THF) serving as the one-carbon carrier. This reaction serves as the major source of one-carbon groups required for the biosynthesis of purines, thymidylate, methionine, and other important biomolecules. Also exhibits THF-independent aldolase activity toward beta-hydroxyamino acids, producing glycine and aldehydes, via a retro-aldol mechanism. This Flavobacterium psychrophilum (strain ATCC 49511 / DSM 21280 / CIP 103535 / JIP02/86) protein is Serine hydroxymethyltransferase.